Here is a 308-residue protein sequence, read N- to C-terminus: Cilia- and flagella-associated protein 73 (308 aa).

Coiled-coil stretches lie at residues 103 to 134 and 164 to 227; these read RIQKEKEIEQLTEVLEELKSEKERILEVLEKN and LSAT…QEAK.

This sequence belongs to the CFAP73 family. Interacts with FAP100; form the modifier of inner arm (MIA) complex.

The protein localises to the cytoplasm. The protein resides in the cytoskeleton. Its subcellular location is the flagellum axoneme. In terms of biological role, as part of MIA, a complex associated with the outer doublet microtubules of the axoneme, may play a role in ciliary/flagellar motility by regulating the assembly and the activity of inner dynein arm. In Chlamydomonas reinhardtii (Chlamydomonas smithii), this protein is Cilia- and flagella-associated protein 73.